A 235-amino-acid chain; its full sequence is Large ribosomal subunit protein uL1 (235 aa).

It belongs to the universal ribosomal protein uL1 family. Part of the 50S ribosomal subunit.

Functionally, binds directly to 23S rRNA. The L1 stalk is quite mobile in the ribosome, and is involved in E site tRNA release. In terms of biological role, protein L1 is also a translational repressor protein, it controls the translation of the L11 operon by binding to its mRNA. The sequence is that of Large ribosomal subunit protein uL1 from Synechococcus sp. (strain CC9605).